Consider the following 277-residue polypeptide: Myelin proteolipid protein (277 aa).

Residues 2 to 9 (GLLECCAR) are Cytoplasmic-facing. S-palmitoyl cysteine attachment occurs at residues Cys6, Cys7, and Cys10. The helical transmembrane segment at 10–36 (CLVGAPFASLVATGLCFFGVALFCGCG) threads the bilayer. Residues 37–63 (HEALTGTEKLIETYFSKNYQDYEYLIN) lie on the Extracellular side of the membrane. The chain crosses the membrane as a helical span at residues 64-88 (VIHAFQYVIYGTASFFFLYGALLLA). The Cytoplasmic segment spans residues 89–151 (EGFYTTGAVR…LGKWLGHPDK (63 aa)). Residue Cys109 is the site of S-palmitoyl cysteine attachment. Residue Ser114 is modified to Phosphoserine. 2 positions are modified to phosphothreonine: Thr116 and Thr118. 2 S-palmitoyl cysteine lipidation sites follow: Cys139 and Cys141. Residues 152-177 (FVGITYALTVVWLLVFACSAVPVYIY) traverse the membrane as a helical segment. Topologically, residues 178-233 (FNTWTTCQSIAFPSKTSASIGSLCADARMYGVLPWNAFPGKVCGSNLLSICKTAEF) are extracellular. 2 cysteine pairs are disulfide-bonded: Cys184–Cys228 and Cys201–Cys220. Ser199 is lipidated: O-palmitoyl serine. A helical membrane pass occupies residues 234-260 (QMTFHLFIAAFVGAAATLVSLLTFMIA). The Cytoplasmic portion of the chain corresponds to 261-277 (ATYNFAVLKLMGRGTKF).

It belongs to the myelin proteolipid protein family. As to quaternary structure, interacts with MAL.

The protein localises to the cell membrane. It localises to the myelin membrane. In terms of biological role, this is the major myelin protein from the central nervous system. It plays an important role in the formation or maintenance of the multilamellar structure of myelin. The polypeptide is Myelin proteolipid protein (Plp1) (Mus musculus (Mouse)).